The primary structure comprises 569 residues: Urease subunit alpha (569 aa).

The region spanning 131–569 (GGIDAHIHWI…LPLAQRYFLF (439 aa)) is the Urease domain. The Ni(2+) site is built by H136, H138, and K219. Residue K219 is modified to N6-carboxylysine. Position 221 (H221) interacts with substrate. Positions 248 and 274 each coordinate Ni(2+). The Proton donor role is filled by H322. D362 is a binding site for Ni(2+).

The protein belongs to the metallo-dependent hydrolases superfamily. Urease alpha subunit family. Heterotrimer of UreA (gamma), UreB (beta) and UreC (alpha) subunits. Three heterotrimers associate to form the active enzyme. Ni cation serves as cofactor. Carboxylation allows a single lysine to coordinate two nickel ions.

It localises to the cytoplasm. It catalyses the reaction urea + 2 H2O + H(+) = hydrogencarbonate + 2 NH4(+). It participates in nitrogen metabolism; urea degradation; CO(2) and NH(3) from urea (urease route): step 1/1. The polypeptide is Urease subunit alpha (Magnetococcus marinus (strain ATCC BAA-1437 / JCM 17883 / MC-1)).